The following is a 644-amino-acid chain: Uromodulin (644 aa).

Positions 1-26 (MGQLLSLTWLLLVMVVTPWFTVAGAN) are cleaved as a signal peptide. One can recognise an EGF-like 1 domain in the interval 30 to 66 (EARRCSECHDNATCVLDGVVTTCSCQAGFTGDGLVCE). 21 disulfides stabilise this stretch: Cys34-Cys43, Cys37-Cys52, Cys54-Cys65, Cys71-Cys84, Cys79-Cys93, Cys95-Cys107, Cys113-Cys127, Cys121-Cys136, Cys138-Cys149, Cys151-Cys162, Cys156-Cys173, Cys177-Cys270, Cys198-Cys285, Cys220-Cys258, Cys226-Cys290, Cys251-Cys259, Cys300-Cys309, Cys303-Cys318, Cys320-Cys350, Cys338-Cys428, and Cys369-Cys392. Asn40 carries an N-linked (GlcNAc...) asparagine glycan. The EGF-like 2; calcium-binding domain maps to 67–108 (DIDECATPWTHNCSNSICMNTLGSYECSCQDGFRLTPGLGCI). A glycan (N-linked (GlcNAc...) asparagine) is linked at Asn78. Residues 109–150 (DVNECTEQGLSNCHSLATCVNTEGSYSCVCPKGYRGDGWYCE) form the EGF-like 3; calcium-binding domain. Residues 151–174 (CSPGFCEPGLDCLPQGPSGKLVCQ) are beta hairpin. Positions 175-294 (DPCNVYETLT…CNLAYCTDPS (120 aa)) are D10C. N-linked (GlcNAc...) asparagine glycosylation occurs at Asn235. Asn278 is a glycosylation site (N-linked (GlcNAc...) asparagine). An EGF-like 4 domain is found at 295–326 (SVEGTCEECGVDEDCVSDNGRWRCQCKQDFNV). An N-linked (GlcNAc...) asparagine glycan is attached at Asn325. The ZP-N stretch occupies residues 337 to 432 (ECEANEIKIS…RINFECSYPL (96 aa)). Residues 337 to 592 (ECEANEIKIS…PTCSGTRYRS (256 aa)) form the ZP domain. Residues Asn399 and Asn450 are each glycosylated (N-linked (GlcNAc...) asparagine). The interval 433 to 456 (DMKVSLKTSLQPMVSALNISLGGT) is flexible ZP-N/ZP-C linker; important for secretion and polymerization into filaments. Residues 457 to 467 (GKFTVQMALFQ) are internal hydrophobic patch (IHP). The interval 457–592 (GKFTVQMALF…PTCSGTRYRS (136 aa)) is ZP-C. Disulfide bonds link Cys509/Cys569, Cys530/Cys585, and Cys574/Cys581. Asn516 carries N-linked (GlcNAc...) asparagine glycosylation. Residues 589-592 (RYRS) form an essential for cleavage by HPN region. An external hydrophobic patch (EHP); regulates polymerization into filaments region spans residues 601–609 (VLNLGPITR). The GPI-anchor amidated serine moiety is linked to residue Ser615. The propeptide at 616–644 (VSKAASSNLGFLSIWLLLFLSATLTLMVH) is removed in mature form.

Homodimer that then polymerizes into long filaments. The filaments can additionally assemble laterally to form a sheet. The filaments consist of a zigzag-shaped backbone with laterally protruding arms which interact with bacterial adhesin fimH. Two fimH molecules can bind to a single UMOD monomer. Post-translationally, N-glycosylated. Proteolytically cleaved at a conserved C-terminal proteolytic cleavage site to generate the secreted form found in urine. This cleavage is catalyzed by HPN. In terms of tissue distribution, expression restricted to the thick ascending limb of the loop of Henle (TALH).

The protein localises to the apical cell membrane. The protein resides in the basolateral cell membrane. It localises to the cell projection. Its subcellular location is the cilium membrane. It is found in the secreted. Its function is as follows. Functions in biogenesis and organization of the apical membrane of epithelial cells of the thick ascending limb of Henle's loop (TALH), where it promotes formation of complex filamentous gel-like structure that may play a role in the water barrier permeability. May serve as a receptor for binding and endocytosis of cytokines (IL-1, IL-2) and TNF. Facilitates neutrophil migration across renal epithelia. In the urine, may contribute to colloid osmotic pressure, retards passage of positively charged electrolytes, and inhibits formation of liquid containing supersaturated salts and subsequent formation of salt crystals. Protects against urinary tract infections by binding to type 1 fimbriated E.coli. Binds to bacterial adhesin fimH which mediates the stable formation of bacterial aggregates, prevents the binding of E.coli to uroplakins UPK1A and UPK1B which act as urothelial receptors for type I fimbriae, and allows for pathogen clearance through micturation. Also promotes aggregation of other bacteria including K.pneumoniae, P.aeruginosa and S.mitis and so may also protect against other uropathogens. The protein is Uromodulin (Umod) of Rattus norvegicus (Rat).